A 364-amino-acid polypeptide reads, in one-letter code: Fructose-bisphosphate aldolase, non-muscle type (364 aa).

Substrate-binding residues include Arg-56 and Lys-147. The Schiff-base intermediate with dihydroxyacetone-P role is filled by Lys-230.

It belongs to the class I fructose-bisphosphate aldolase family. In terms of assembly, homotetramer. As to expression, expressed mainly in the liver and also in brain and other tissues, except for the heart muscle.

The catalysed reaction is beta-D-fructose 1,6-bisphosphate = D-glyceraldehyde 3-phosphate + dihydroxyacetone phosphate. It participates in carbohydrate degradation; glycolysis; D-glyceraldehyde 3-phosphate and glycerone phosphate from D-glucose: step 4/4. This is Fructose-bisphosphate aldolase, non-muscle type from Lethenteron camtschaticum (Japanese lamprey).